Reading from the N-terminus, the 326-residue chain is Acetyl-coenzyme A carboxylase carboxyl transferase subunit alpha (326 aa).

In terms of domain architecture, CoA carboxyltransferase C-terminal spans 45 to 298 (LEARAMQLRE…KQVLLENLDE (254 aa)).

This sequence belongs to the AccA family. As to quaternary structure, acetyl-CoA carboxylase is a heterohexamer composed of biotin carboxyl carrier protein (AccB), biotin carboxylase (AccC) and two subunits each of ACCase subunit alpha (AccA) and ACCase subunit beta (AccD).

The protein resides in the cytoplasm. It catalyses the reaction N(6)-carboxybiotinyl-L-lysyl-[protein] + acetyl-CoA = N(6)-biotinyl-L-lysyl-[protein] + malonyl-CoA. It participates in lipid metabolism; malonyl-CoA biosynthesis; malonyl-CoA from acetyl-CoA: step 1/1. Its function is as follows. Component of the acetyl coenzyme A carboxylase (ACC) complex. First, biotin carboxylase catalyzes the carboxylation of biotin on its carrier protein (BCCP) and then the CO(2) group is transferred by the carboxyltransferase to acetyl-CoA to form malonyl-CoA. This Nostoc punctiforme (strain ATCC 29133 / PCC 73102) protein is Acetyl-coenzyme A carboxylase carboxyl transferase subunit alpha.